The following is a 503-amino-acid chain: Maturase K (503 aa).

The protein belongs to the intron maturase 2 family. MatK subfamily.

Its subcellular location is the plastid. It localises to the chloroplast. Functionally, usually encoded in the trnK tRNA gene intron. Probably assists in splicing its own and other chloroplast group II introns. In Lathyrus vestitus (Pacific pea), this protein is Maturase K.